Reading from the N-terminus, the 101-residue chain is Thioredoxin 1 (101 aa).

The Thioredoxin domain maps to 2–101 (AQTLDDLIRT…MRQEVLKAIG (100 aa)). An intrachain disulfide couples Cys-25 to Cys-28.

The protein belongs to the thioredoxin family.

Participates in various redox reactions through the reversible oxidation of its active center dithiol to a disulfide and catalyzes dithiol-disulfide exchange reactions. This is Thioredoxin 1 (trx1) from Chlorobaculum tepidum (strain ATCC 49652 / DSM 12025 / NBRC 103806 / TLS) (Chlorobium tepidum).